The sequence spans 1852 residues: Voltage-dependent L-type calcium channel subunit alpha-1S (1852 aa).

Residues 1-23 (MEPPSPQDEGLRKKQPKKPVPEI) form a disordered region. The Cytoplasmic portion of the chain corresponds to 1–51 (MEPPSPQDEGLRKKQPKKPVPEILPRPPRALFCLTLQNPLRKACISIVEWK). Residues 38–337 (NPLRKACISI…LVLGVLSGEF (300 aa)) form an I repeat. A helical transmembrane segment spans residues 52-70 (PFETIILLTIFANCVALAV). Over 71 to 85 (YLPMPEDDNNTLNLG) the chain is Extracellular. Asparagine 79 carries N-linked (GlcNAc...) asparagine glycosylation. A helical transmembrane segment spans residues 86–106 (LEKLEYFFLIVFSIEAAMKII). Residues 107–115 (AYGFLFHQD) are Cytoplasmic-facing. Residues 116-136 (AYLRSGWNVLDFIIVFLGVFT) form a helical membrane-spanning segment. Residues 137 to 160 (VILEQVNIIQTNTAPMSSKGAGLD) lie on the Extracellular side of the membrane. Residues 161 to 179 (VKALRAFRVLRPLRLVSGV) form a helical membrane-spanning segment. Residues 180-196 (PSLQVVLNSIFKAMLPL) lie on the Cytoplasmic side of the membrane. Residues 197–218 (FHIALLVLFMVIIYAIIGLELF) form a helical membrane-spanning segment. Over 219 to 279 (KGKMHKTCYF…HGITHFDNFG (61 aa)) the chain is Extracellular. 2 disulfide bridges follow: cysteine 226–cysteine 254 and cysteine 245–cysteine 261. An N-linked (GlcNAc...) asparagine glycan is attached at asparagine 257. The segment at residues 280-301 (FSMLTVYQCISMEGWTDVLYWV) is an intramembrane region (pore-forming). The Selectivity filter of repeat I motif lies at 290–293 (SMEG). Glutamate 292 contacts Ca(2+). Topologically, residues 302 to 309 (NDAIGNEW) are extracellular. A helical membrane pass occupies residues 310–330 (PWIYFVTLILLGSFFILNLVL). At 331 to 432 (GVLSGEFTKE…WKCHDLVKSK (102 aa)) the chain is on the cytoplasmic side. Residues 357–374 (QQLEEDLRGYMSWITQGE) are binding to the beta subunit. A phosphoserine mark is found at serine 393 and serine 397. Residues 418–664 (NRVFRWKCHD…VFLAIAVDNL (247 aa)) form an II repeat. The helical transmembrane segment at 433–451 (VFYWLVILIVALNTLSIAS) threads the bilayer. The Extracellular segment spans residues 452–462 (EHHNQPLWLTH). A helical transmembrane segment spans residues 463 to 483 (LQDVANRVLLTLFTIEMLMKM). The Cytoplasmic segment spans residues 484-494 (YGLGLRQYFMS). The chain crosses the membrane as a helical span at residues 495–514 (IFNRFDCFVVCSGILEILLV). Residues 515-523 (ESGAMSPLG) are Extracellular-facing. Residues 524-542 (ISVLRCIRLLRLFKITKYW) form a helical membrane-spanning segment. At 543 to 561 (TSLSNLVASLLNSIRSIAS) the chain is on the cytoplasmic side. Residues 562 to 581 (LLLLLFLFIIIFALLGMQLF) traverse the membrane as a helical segment. Residues 582 to 601 (GGRYDFEDTEVRRSNFDNFP) lie on the Extracellular side of the membrane. An intramembrane region (pore-forming) is located at residues 602 to 623 (QALISVFQVLTGEDWNSVMYNG). A Selectivity filter of repeat II motif is present at residues 612–615 (TGED). Ca(2+) is bound at residue glutamate 614. Residues 624–633 (IMAYGGPTYP) are Extracellular-facing. The chain crosses the membrane as a helical span at residues 634–653 (GVLVCIYFIILFVCGNYILL). Residues 654-799 (NVFLAIAVDN…VLCHRIVNAT (146 aa)) lie on the Cytoplasmic side of the membrane. Disordered stretches follow at residues 675 to 712 (KAKA…SKGE) and 731 to 757 (EVKD…VSPR). Residue serine 687 is modified to Phosphoserine; by PKA. Residues 690 to 711 (LPDKSEEERATVTKKLEQKSKG) are compositionally biased toward basic and acidic residues. A compositionally biased stretch (acidic residues) spans 742 to 751 (PGDDEEDEPE). One copy of the III repeat lies at 768 to 1068 (EKAVPIPEAS…IFVGFVIVTF (301 aa)). The helical transmembrane segment at 800–818 (WFTNFILLFILLSSAALAA) threads the bilayer. At 819 to 830 (EDPIRADSMRNQ) the chain is on the extracellular side. Residues 831–850 (ILEYFDYVFTAVFTVEIVLK) traverse the membrane as a helical segment. The Cytoplasmic segment spans residues 851–866 (MTTYGAFLHKGSFCRN). The chain crosses the membrane as a helical span at residues 867–885 (YFNILDLLVVAVSLISMGL). Over 886–892 (ESSAISV) the chain is Extracellular. A helical membrane pass occupies residues 893–911 (VKILRVLRVLRPLRAINRA). Residues 912–930 (KGLKHVVQCVFVAIRTIGN) lie on the Cytoplasmic side of the membrane. The helical transmembrane segment at 931 to 950 (IVLVTTLLQFMFACIGVQLF) threads the bilayer. Over 951–1000 (KGKFYSCNDLSKMTEEECRGYYYIYKDGDPTQIELRPRQWIHNDFHFDNV) the chain is Extracellular. A disulfide bond links cysteine 957 and cysteine 968. The segment at 988 to 1077 (RQWIHNDFHF…FQEQGETEYK (90 aa)) is dihydropyridine binding. The segment at residues 1001–1021 (LSAMMSLFTVSTFEGWPQLLY) is an intramembrane region (pore-forming). The Selectivity filter of repeat III motif lies at 1012 to 1015 (TFEG). A Ca(2+)-binding site is contributed by glutamate 1014. Over 1022–1038 (KAIDSNEEDTGPVYNNR) the chain is Extracellular. Residues 1039–1060 (VEMAIFFIIYIILIAFFMMNIF) traverse the membrane as a helical segment. Topologically, residues 1061 to 1118 (VGFVIVTFQEQGETEYKNCELDKNQRQCVQYALKARPLRCYIPKNPYQYQVWYVVTSS) are cytoplasmic. The IV repeat unit spans residues 1105–1384 (NPYQYQVWYV…LFVAVIMDNF (280 aa)). The helical transmembrane segment at 1119 to 1140 (YFEYLMFALIMLNTICLGMQHY) threads the bilayer. The N-linked (GlcNAc...) asparagine glycan is linked to asparagine 1141. Topologically, residues 1141–1148 (NQSEQMNH) are extracellular. Residues 1149-1170 (ISDILNVAFTIIFTLEMVLKLI) traverse the membrane as a helical segment. Topologically, residues 1171-1180 (AFKPRGYFGD) are cytoplasmic. Residues 1181-1200 (PWNVFDFLIVIGSIIDVILS) traverse the membrane as a helical segment. Residues 1201 to 1231 (EIDTFLASSGGLYCLGGGCGNVDPDESARIS) lie on the Extracellular side of the membrane. The chain crosses the membrane as a helical span at residues 1232–1250 (SAFFRLFRVMRLVKLLNRA). At 1251 to 1268 (EGVRTLLWTFIKSFQALP) the chain is on the cytoplasmic side. A helical membrane pass occupies residues 1269-1289 (YVALLIVMLFFIYAVIGMQMF). Over 1290–1311 (GKIAMVDGTQINRNNNFQTFPQ) the chain is Extracellular. An intramembrane region (pore-forming) is located at residues 1312–1330 (AVLLLFRCATGEAWQEILL). The short motif at 1321-1324 (TGEA) is the Selectivity filter of repeat IV element. Topologically, residues 1331–1356 (ACSYGKLCDPESDYAPGEEHTCGTNF) are extracellular. The tract at residues 1337–1403 (LCDPESDYAP…LGPHHLDEFK (67 aa)) is dihydropyridine binding. An intrachain disulfide couples cysteine 1338 to cysteine 1352. Phenylalkylamine binding regions lie at residues 1349–1391 (EHTC…TRDW) and 1349–1392 (EHTC…RDWS). The helical transmembrane segment at 1357–1381 (AYYYFISFYMLCAFLIINLFVAVIM) threads the bilayer. At 1382–1852 (DNFDYLTRDW…PEGGAVPWEP (471 aa)) the chain is on the cytoplasmic side. The interval 1522-1542 (KFYATFLIQEHFRKFMKRQEE) is interaction with calmodulin. Serine 1575 is modified (phosphoserine; by PKA and CAMK2). A Phosphothreonine modification is found at threonine 1579. A Phosphoserine; by PKA modification is found at serine 1617. 2 disordered regions span residues 1702 to 1721 (GPLS…HVDK) and 1727 to 1762 (TQRG…PTSR). Residues 1747–1757 (KAEHPVQKEGK) show a composition bias toward basic and acidic residues.

It belongs to the calcium channel alpha-1 subunit (TC 1.A.1.11) family. CACNA1S subfamily. Component of a calcium channel complex consisting of a pore-forming alpha subunit (CACNA1S) and the ancillary subunits CACNB1 or CACNB2, CACNG1 and CACNA2D1. The channel complex contains alpha, beta, gamma and delta subunits in a 1:1:1:1 ratio, i.e. it contains either CACNB1 or CACNB2. CACNA1S channel activity is modulated by the auxiliary subunits (CACNB1 or CACNB2, CACNG1 and CACNA2D1). Interacts with DYSF and JSRP1. Interacts with RYR1. Interacts with STAC, STAC2 and STAC3 (via their SH3 domains). Interacts with CALM. In terms of processing, the alpha-1S subunit is found in two isoforms in the skeletal muscle: a minor form of 212 kDa containing the complete amino acid sequence, and a major form of 190 kDa derived from the full-length form by post-translational proteolysis close to Phe-1690. Post-translationally, phosphorylated. Phosphorylation by PKA activates the calcium channel. Both the minor and major forms are phosphorylated in vitro by PKA. Phosphorylation at Ser-1575 is involved in beta-adrenergic-mediated regulation of the channel.

The protein localises to the cell membrane. It is found in the sarcolemma. Its subcellular location is the T-tubule. It catalyses the reaction Ca(2+)(in) = Ca(2+)(out). Its activity is regulated as follows. Channel activity is blocked by dihydropyridines (DHP), phenylalkylamines, and by benzothiazepines. Pore-forming, alpha-1S subunit of the voltage-gated calcium channel that gives rise to L-type calcium currents in skeletal muscle. Calcium channels containing the alpha-1S subunit play an important role in excitation-contraction coupling in skeletal muscle via their interaction with RYR1, which triggers Ca(2+) release from the sarcplasmic reticulum and ultimately results in muscle contraction. Long-lasting (L-type) calcium channels belong to the 'high-voltage activated' (HVA) group. The protein is Voltage-dependent L-type calcium channel subunit alpha-1S (Cacna1s) of Mus musculus (Mouse).